Here is a 324-residue protein sequence, read N- to C-terminus: Malate dehydrogenase (324 aa).

Residues 20–25 (GAGNVG) and D44 each bind NAD(+). Residues R93 and R99 each contribute to the substrate site. NAD(+) contacts are provided by residues N106 and 129–131 (VTN). Residues N131 and R162 each coordinate substrate. H186 functions as the Proton acceptor in the catalytic mechanism.

Belongs to the LDH/MDH superfamily. MDH type 3 family.

The enzyme catalyses (S)-malate + NAD(+) = oxaloacetate + NADH + H(+). Functionally, catalyzes the reversible oxidation of malate to oxaloacetate. The protein is Malate dehydrogenase of Synechocystis sp. (strain ATCC 27184 / PCC 6803 / Kazusa).